We begin with the raw amino-acid sequence, 514 residues long: Voltage-gated potassium channel regulatory subunit KCNG1 (514 aa).

The Cytoplasmic segment spans residues 1–224 (MTLLPGDNSH…DMVERPHSGL (224 aa)). Residues 180–196 (MEREEEEEPLDSEDQES) show a composition bias toward acidic residues. The interval 180 to 205 (MEREEEEEPLDSEDQESEGPSASEGR) is disordered. A helical membrane pass occupies residues 225–246 (PGKVFACLSVLFVTVTAVNLSV). Topologically, residues 247 to 267 (STLPSLREEEEQGQCSQMCHN) are extracellular. Residues 268-289 (VFIVESVCVGWFSLEFLLRFIQ) form a helical membrane-spanning segment. At 290-300 (APSKFAFLRSP) the chain is on the cytoplasmic side. Residues 301–321 (LTLIDLVAILPYYVTLLVDGA) traverse the membrane as a helical segment. The Extracellular segment spans residues 322–338 (ASSRRKPSTGNSYLDKV). The chain crosses the membrane as a helical; Voltage-sensor span at residues 339–359 (GLVLRVLRALRILYVMRLARH). Topologically, residues 360-374 (SLGLQTLGLTARRCT) are cytoplasmic. Residues 375 to 396 (REFGLLLLFLCVAIALFAPLLY) traverse the membrane as a helical segment. The Extracellular segment spans residues 397 to 411 (VIENEMADSPEFTSI). Residues 412–423 (PACYWWAVITMT) constitute an intramembrane region (helical). The Selectivity filter signature appears at 424 to 429 (TVGYGD). Residues 424 to 431 (TVGYGDMV) lie within the membrane without spanning it. At 432–438 (PRSTPGQ) the chain is on the extracellular side. Residues 439–467 (VVALSSILSGILLMAFPVTSIFHTFSRSY) traverse the membrane as a helical segment. Residues 468 to 514 (LELKQEQERVLIRRAQYLIKTKSQLSGMSQDSDILFGSASSDTRDNN) lie on the Cytoplasmic side of the membrane.

This sequence belongs to the potassium channel family. G (TC 1.A.1.2) subfamily. Kv6.1/KCNG1 sub-subfamily. As to quaternary structure, heterotetramer with KCNB1 or KCNB2.

It is found in the cell membrane. Regulatory alpha-subunit of the voltage-gated potassium (Kv) channel which, when coassembled with KCNB1 or KCNB2, can modulate their expression and their gating kinetics by acting on deactivation upon repolarization and inactivation during maintained depolarization. Potassium channel subunit that does not form functional channels by itself. The protein is Voltage-gated potassium channel regulatory subunit KCNG1 of Mus musculus (Mouse).